The chain runs to 142 residues: Small ribosomal subunit protein uS12 (142 aa).

It belongs to the universal ribosomal protein uS12 family. In terms of assembly, part of the 30S ribosomal subunit.

Its function is as follows. With S4 and S5 plays an important role in translational accuracy. Located at the interface of the 30S and 50S subunits. This is Small ribosomal subunit protein uS12 from Methanococcoides burtonii (strain DSM 6242 / NBRC 107633 / OCM 468 / ACE-M).